Consider the following 70-residue polypeptide: Small ribosomal subunit protein bS21 (70 aa).

This sequence belongs to the bacterial ribosomal protein bS21 family.

This Sulfurimonas denitrificans (strain ATCC 33889 / DSM 1251) (Thiomicrospira denitrificans (strain ATCC 33889 / DSM 1251)) protein is Small ribosomal subunit protein bS21.